The primary structure comprises 259 residues: Phosphate import ATP-binding protein PstB 1 (259 aa).

In terms of domain architecture, ABC transporter spans 7 to 254 (VKPEDVYQIN…PDDHRTKDYI (248 aa)). 45–52 (GPSGCGKS) contacts ATP.

Belongs to the ABC transporter superfamily. Phosphate importer (TC 3.A.1.7) family. The complex is composed of two ATP-binding proteins (PstB), two transmembrane proteins (PstC and PstA) and a solute-binding protein (PstS).

It is found in the cell membrane. It carries out the reaction phosphate(out) + ATP + H2O = ADP + 2 phosphate(in) + H(+). Its function is as follows. Part of the ABC transporter complex PstSACB involved in phosphate import. Responsible for energy coupling to the transport system. In Bacillus licheniformis (strain ATCC 14580 / DSM 13 / JCM 2505 / CCUG 7422 / NBRC 12200 / NCIMB 9375 / NCTC 10341 / NRRL NRS-1264 / Gibson 46), this protein is Phosphate import ATP-binding protein PstB 1.